Consider the following 199-residue polypeptide: Dephospho-CoA kinase (199 aa).

In terms of domain architecture, DPCK spans 3 to 199 (VLGLTGSIGM…AAARMPRRRP (197 aa)). An ATP-binding site is contributed by 11-16 (GMGKST).

The protein belongs to the CoaE family.

It localises to the cytoplasm. It catalyses the reaction 3'-dephospho-CoA + ATP = ADP + CoA + H(+). It participates in cofactor biosynthesis; coenzyme A biosynthesis; CoA from (R)-pantothenate: step 5/5. Its function is as follows. Catalyzes the phosphorylation of the 3'-hydroxyl group of dephosphocoenzyme A to form coenzyme A. The polypeptide is Dephospho-CoA kinase (Rhodopseudomonas palustris (strain HaA2)).